We begin with the raw amino-acid sequence, 58 residues long: Potassium channel toxin alpha-KTx 1.6 (58 aa).

An N-terminal signal peptide occupies residues 1–21; it reads MKISFLLLLAIVICSIGWTEA. Pyrrolidone carboxylic acid is present on Gln22. 3 disulfide bridges follow: Cys28/Cys49, Cys34/Cys54, and Cys38/Cys56.

It belongs to the short scorpion toxin superfamily. Potassium channel inhibitor family. Alpha-KTx 01 subfamily. As to expression, expressed by the venom gland.

It localises to the secreted. Functionally, potent blocker of both large-conductance calcium-activated potassium channels (KCa1.1/KCNMA1) and voltage-gated potassium channels (Kv1.3/KCNA3 and ERG1/Kv11.1/KCNH2). This is Potassium channel toxin alpha-KTx 1.6 from Olivierus martensii (Manchurian scorpion).